Here is a 129-residue protein sequence, read N- to C-terminus: Glycine cleavage system H protein (129 aa).

The Lipoyl-binding domain occupies 24–106 (LFKIGVSEFA…IGDGWLLIIK (83 aa)). Lys65 is subject to N6-lipoyllysine.

Belongs to the GcvH family. In terms of assembly, the glycine cleavage system is composed of four proteins: P, T, L and H. (R)-lipoate serves as cofactor.

In terms of biological role, the glycine cleavage system catalyzes the degradation of glycine. The H protein shuttles the methylamine group of glycine from the P protein to the T protein. The protein is Glycine cleavage system H protein of Prochlorococcus marinus subsp. pastoris (strain CCMP1986 / NIES-2087 / MED4).